The following is a 578-amino-acid chain: Hemolysin 4 (578 aa).

A disordered region spans residues 289 to 322; it reads KDGPKASWRRRPSSASSVTMPTTPRIIGSNARPE. The 92-residue stretch at 448 to 539 folds into the Ricin B-type lectin domain; it reads RPVNLQLGGF…LSNLSAHQLL (92 aa).

This sequence belongs to the HlyA hemolysin family.

Functionally, bacterial hemolysins are exotoxins that attack blood cell membranes and cause cell rupture by mechanisms not clearly defined. The polypeptide is Hemolysin 4 (ash4) (Aeromonas salmonicida).